A 319-amino-acid chain; its full sequence is Dehydrogenase/reductase SDR family member 9 (319 aa).

The N-terminal stretch at 1 to 17 (MLFWLLVLLILCGFLWN) is a signal peptide. NAD(+) contacts are provided by residues 34–58 (ITGCDTGFGNLAARTFDKKGFHVIA) and Asp83. Residue Ser164 coordinates substrate. The active-site Proton acceptor is the Tyr176. Lys180 is an NAD(+) binding site.

Belongs to the short-chain dehydrogenases/reductases (SDR) family. In terms of assembly, homotetramer.

It localises to the microsome membrane. Its subcellular location is the endoplasmic reticulum membrane. The enzyme catalyses 3beta-hydroxy-5alpha-pregnane-20-one + NAD(+) = 5alpha-pregnane-3,20-dione + NADH + H(+). It catalyses the reaction 17beta-hydroxy-5alpha-androstan-3-one + NAD(+) = 5alpha-androstan-3,17-dione + NADH + H(+). The catalysed reaction is androsterone + NAD(+) = 5alpha-androstan-3,17-dione + NADH + H(+). It carries out the reaction 5alpha-androstane-3alpha,17beta-diol + NAD(+) = 17beta-hydroxy-5alpha-androstan-3-one + NADH + H(+). The enzyme catalyses all-trans-retinol + NAD(+) = all-trans-retinal + NADH + H(+). It catalyses the reaction 3alpha-hydroxy-5alpha-pregnan-20-one + NAD(+) = 5alpha-pregnane-3,20-dione + NADH + H(+). In terms of biological role, 3-alpha-hydroxysteroid dehydrogenase that converts 3-alpha-tetrahydroprogesterone (allopregnanolone) to dihydroxyprogesterone and 3-alpha-androstanediol to dihydroxyprogesterone. Also plays a role in the biosynthesis of retinoic acid from retinaldehyde. Can utilize both NADH and NADPH. The sequence is that of Dehydrogenase/reductase SDR family member 9 (DHRS9) from Bos taurus (Bovine).